The primary structure comprises 185 residues: Casparian strip membrane protein 1 (185 aa).

At 1–32 the chain is on the cytoplasmic side; sequence MKAVSIEAGERSKAKRVHGVNRGISVFDLVLR. Residues 33 to 53 traverse the membrane as a helical segment; sequence IVALVGTLASAVAMGTAGQAL. The Extracellular portion of the chain corresponds to 54-73; sequence SFSTQIVNFEAQYDDIDAFK. The helical transmembrane segment at 74–94 threads the bilayer; sequence FFVVSNSITCVYLALSIPISI. Topologically, residues 95–106 are cytoplasmic; it reads FHIIRSRAGKSR. Residues 107–127 form a helical membrane-spanning segment; it reads VLLIVLDAIMLVFLTSGASAA. Over 128–160 the chain is Extracellular; the sequence is AAIVYLAHNGNTSTNWFSICQQYTDFCQRSAGS. A glycan (N-linked (GlcNAc...) asparagine) is linked at asparagine 138. The helical transmembrane segment at 161–181 threads the bilayer; it reads LIGSFGAMALMVLLIILSSIA. Residues 182–185 lie on the Cytoplasmic side of the membrane; sequence LSRR.

Belongs to the Casparian strip membrane proteins (CASP) family. In terms of assembly, homodimer and heterodimers.

It is found in the cell membrane. Functionally, regulates membrane-cell wall junctions and localized cell wall deposition. Required for establishment of the Casparian strip membrane domain (CSD) and the subsequent formation of Casparian strips, a cell wall modification of the root endodermis that determines an apoplastic barrier between the intraorganismal apoplasm and the extraorganismal apoplasm and prevents lateral diffusion. The chain is Casparian strip membrane protein 1 from Solanum demissum (Wild potato).